A 260-amino-acid chain; its full sequence is Ditrans,polycis-undecaprenyl-diphosphate synthase ((2E,6E)-farnesyl-diphosphate specific) (260 aa).

Aspartate 20 is an active-site residue. Aspartate 20 is a Mg(2+) binding site. Substrate-binding positions include 21–24, tryptophan 25, arginine 33, histidine 37, and 65–67; these read GNGR and SSE. The active-site Proton acceptor is asparagine 68. Substrate-binding residues include tryptophan 69, arginine 71, and arginine 188. Histidine 193 is a binding site for Mg(2+). 194–196 lines the substrate pocket; that stretch reads RIS. Glutamate 207 contributes to the Mg(2+) binding site.

The protein belongs to the UPP synthase family. Homodimer. The cofactor is Mg(2+).

The enzyme catalyses 8 isopentenyl diphosphate + (2E,6E)-farnesyl diphosphate = di-trans,octa-cis-undecaprenyl diphosphate + 8 diphosphate. Functionally, catalyzes the sequential condensation of isopentenyl diphosphate (IPP) with (2E,6E)-farnesyl diphosphate (E,E-FPP) to yield (2Z,6Z,10Z,14Z,18Z,22Z,26Z,30Z,34E,38E)-undecaprenyl diphosphate (di-trans,octa-cis-UPP). UPP is the precursor of glycosyl carrier lipid in the biosynthesis of bacterial cell wall polysaccharide components such as peptidoglycan and lipopolysaccharide. In Wigglesworthia glossinidia brevipalpis, this protein is Ditrans,polycis-undecaprenyl-diphosphate synthase ((2E,6E)-farnesyl-diphosphate specific).